A 269-amino-acid chain; its full sequence is Chymotrypsin-like elastase family member 3B (269 aa).

An N-terminal signal peptide occupies residues 1–16 (MLRLLSSLLLVALASG). Residues 17 to 27 (CGQPSHNPSSR) constitute a propeptide, activation peptide. The Peptidase S1 domain maps to 28 to 267 (VVNGEEAVPH…FIDWIEETIA (240 aa)). Cys57 and Cys73 are joined by a disulfide. Catalysis depends on charge relay system residues His72 and Asp122. 3 disulfide bridges follow: Cys156–Cys222, Cys187–Cys203, and Cys212–Cys243. The active-site Charge relay system is the Ser216.

Belongs to the peptidase S1 family. Elastase subfamily.

The catalysed reaction is Preferential cleavage: Ala-|-Xaa. Does not hydrolyze elastin.. Efficient protease with alanine specificity but only little elastolytic activity. This is Chymotrypsin-like elastase family member 3B (Cela3b) from Mus musculus (Mouse).